A 226-amino-acid chain; its full sequence is PKHD-type hydroxylase MADE_1018490 (226 aa).

The Fe2OG dioxygenase domain occupies 77-177 (RIFPPCFNRY…RIAAITWIQS (101 aa)). Positions 95, 97, and 158 each coordinate Fe cation. 2-oxoglutarate is bound at residue R168.

Fe(2+) is required as a cofactor. Requires L-ascorbate as cofactor.

In Alteromonas mediterranea (strain DSM 17117 / CIP 110805 / LMG 28347 / Deep ecotype), this protein is PKHD-type hydroxylase MADE_1018490.